The following is a 131-amino-acid chain: uncharacterized protein (131 aa).

One can recognise a CMP/dCMP-type deaminase domain in the interval 1–116 (MYMARMLSEM…EMLEASSIQC (116 aa)).

This is an uncharacterized protein from Caenorhabditis elegans.